Reading from the N-terminus, the 199-residue chain is ATP-dependent Clp protease proteolytic subunit (199 aa).

Residue S97 is the Nucleophile of the active site. Residue H122 is part of the active site.

The protein belongs to the peptidase S14 family. As to quaternary structure, fourteen ClpP subunits assemble into 2 heptameric rings which stack back to back to give a disk-like structure with a central cavity, resembling the structure of eukaryotic proteasomes.

Its subcellular location is the cytoplasm. The enzyme catalyses Hydrolysis of proteins to small peptides in the presence of ATP and magnesium. alpha-casein is the usual test substrate. In the absence of ATP, only oligopeptides shorter than five residues are hydrolyzed (such as succinyl-Leu-Tyr-|-NHMec, and Leu-Tyr-Leu-|-Tyr-Trp, in which cleavage of the -Tyr-|-Leu- and -Tyr-|-Trp bonds also occurs).. Functionally, cleaves peptides in various proteins in a process that requires ATP hydrolysis. Has a chymotrypsin-like activity. Plays a major role in the degradation of misfolded proteins. In Geotalea daltonii (strain DSM 22248 / JCM 15807 / FRC-32) (Geobacter daltonii), this protein is ATP-dependent Clp protease proteolytic subunit.